A 312-amino-acid chain; its full sequence is uncharacterized protein (312 aa).

It belongs to the asfivirus CP312R family.

It localises to the virion. This is an uncharacterized protein from African swine fever virus (isolate Tick/Malawi/Lil 20-1/1983) (ASFV).